The sequence spans 155 residues: Transcriptional repressor NrdR (155 aa).

A zinc finger spans residues 3-34 (CPYCGHLEDRVVDSRETQDGQATRRRRACLSC). Positions 49 to 139 (PQVVKKDGRR…VYRAFRDVGE (91 aa)) constitute an ATP-cone domain.

The protein belongs to the NrdR family. It depends on Zn(2+) as a cofactor.

Functionally, negatively regulates transcription of bacterial ribonucleotide reductase nrd genes and operons by binding to NrdR-boxes. This is Transcriptional repressor NrdR from Anaeromyxobacter sp. (strain K).